The sequence spans 363 residues: Cyanide hydratase (363 aa).

The 280-residue stretch at 6 to 285 (YKAACVTSEP…DGLLFVDIDL (280 aa)) folds into the CN hydrolase domain. Residue Glu-46 is the Proton acceptor of the active site. Lys-128 is an active-site residue. Cys-163 serves as the catalytic Nucleophile.

Belongs to the carbon-nitrogen hydrolase superfamily. Nitrilase family. As to quaternary structure, oligomer of dimers, forming left-handed helical fibers.

It carries out the reaction formamide = hydrogen cyanide + H2O. Functionally, catalyzes the hydration of cyanide to formamide. Degradation of cyanide may be important for plant pathogenic fungi in infection of cyanogenic plants. The protein is Cyanide hydratase (CyhAB) of Alternaria brassicicola (Dark leaf spot agent).